Here is a 641-residue protein sequence, read N- to C-terminus: Toxin TseL (641 aa).

As to quaternary structure, interacts with VgrG3; this interaction allows TseL secretion to target cells.

The protein localises to the secreted. Toxin secreted by the type VI (T6SS) secretion system that acts on prokaryotic as well as eukaryotic target cells. The protein is Toxin TseL of Vibrio cholerae serotype O1 (strain ATCC 39315 / El Tor Inaba N16961).